Reading from the N-terminus, the 410-residue chain is MTKLVRGFRDIFAPESNNFAELEACARRVFTLAGGTEVRIPTLELKELFIKSTGDTTDIVQKEMYAFEDAGGRVLAMRPEGTPGTVRAYIENNFAQTAPVQKLFYIGNMFRAERPQAGRYREFEQIGMEYIGNPSPAADAEIILMIKDIVTSFGVKNYGVKINSLGCQECRPAYKQELINYLKKDFDTLCEKCKDRLEKNPLRVLDCKIDGARFKENAPKQKLCAACENHFNEVKTFLQGRIDYIIDPSLVRGLDYYTRTVFEFQAGDSAQNAIAGGGRYDSLVKSMGGADMPAVGFAMGVERTIAARGETKDNKQNKIFVVSLDKNCNAKAFEIMSLLRSAGVICDGGLFDKNLKAQMKQADRTKSSFALLLGADEFEKGVVTMRDLSSGEQQEIKFNDILNKVGKIRL.

Belongs to the class-II aminoacyl-tRNA synthetase family. As to quaternary structure, homodimer.

Its subcellular location is the cytoplasm. The enzyme catalyses tRNA(His) + L-histidine + ATP = L-histidyl-tRNA(His) + AMP + diphosphate + H(+). This Elusimicrobium minutum (strain Pei191) protein is Histidine--tRNA ligase.